A 263-amino-acid polypeptide reads, in one-letter code: UPF0739 protein C1orf74 homolog (263 aa).

The protein belongs to the UPF0739 family.

This Bos taurus (Bovine) protein is UPF0739 protein C1orf74 homolog.